A 1104-amino-acid chain; its full sequence is Transient receptor potential cation channel subfamily M member 8 (1104 aa).

The tract at residues 1-22 is disordered; sequence MSFEGARLSMRSRRNGTMGSTR. The Cytoplasmic segment spans residues 1–733; the sequence is MSFEGARLSM…LWYYVAFFTS (733 aa). Residues 734–758 form a helical membrane-spanning segment; sequence PFVVFSWNVVFYIAFLLLFAYVLLM. The Extracellular portion of the chain corresponds to 759–765; that stretch reads DFHSVPH. A helical membrane pass occupies residues 766–789; the sequence is TPELILYALVFVLFCDEVRQWYMN. Ca(2+) is bound by residues glutamate 782 and glutamine 785. The Cytoplasmic portion of the chain corresponds to 790 to 796; the sequence is GVNYFTD. A helical membrane pass occupies residues 797–817; the sequence is LWNVMDTLGLFYFIAGIVFRL. Positions 799 and 802 each coordinate Ca(2+). The Extracellular segment spans residues 818–822; sequence HSSNK. The chain crosses the membrane as a helical span at residues 823–848; it reads SSLYSGRVIFCLDYIIFTLRLIHIFT. Topologically, residues 849–853 are cytoplasmic; that stretch reads VSRNL. Residues 854 to 890 form a helical membrane-spanning segment; sequence GPKIIMLQRMLIDVFFFLFLFAVWMVAFGVARQGILR. At 891–895 the chain is on the extracellular side; the sequence is QNEQR. The segment at residues 896 to 912 is an intramembrane region (pore-forming); the sequence is WRWIFRSVIYEPYLAMF. The Extracellular segment spans residues 913–953; the sequence is GQVPSDVDSTTYDFSHCTFSGNESKPLCVELDEHNLPRFPE. N-linked (GlcNAc...) (complex) asparagine glycosylation is present at asparagine 934. Residues 954 to 984 form a helical membrane-spanning segment; it reads WITIPLVCIYMLSTNILLVNLLVAMFGYTVG. Residues 985-1104 lie on the Cytoplasmic side of the membrane; it reads IVQENNDQVW…LLKEIANNIK (120 aa). A coiled-coil region spans residues 1069–1104; the sequence is TKANDNSEEMRHRFRQLDSKLNDLKSLLKEIANNIK.

Belongs to the transient receptor (TC 1.A.4) family. LTrpC subfamily. TRPM8 sub-subfamily. In terms of assembly, homotetramer. Interacts (via N-terminus and C-terminus domains) with TCAF1; the interaction stimulates TRPM8 channel activity. Interacts (via N-terminus and C-terminus domains) with TCAF2; the interaction inhibits TRPM8 channel activity. In terms of processing, N-glycosylation is not essential for but facilitates cell surface expression, multimerization, association with lipid rafts and ion channel activity. Expressed in dorsal root and trigeminal ganglia. Specifically expressed in a subset of pain- and temperature-sensing neurons. Not expressed in heavily myelinated neurons. Not expressed in neurons expressing TRPA1 or TRPV1.

Its subcellular location is the cell membrane. It localises to the membrane raft. It catalyses the reaction Ca(2+)(in) = Ca(2+)(out). It carries out the reaction Na(+)(in) = Na(+)(out). The catalysed reaction is K(+)(in) = K(+)(out). Activated by cold temperatures and by both natural and synthetic cooling compounds such as menthol and icilin. Activation of the channel requires the presence of PI(4,5)P2; PI(4,5)P2 is necessary to gate the channel. Activated by intracellular Ca(2+). In terms of biological role, non-selective ion channel permeable to monovalent and divalent cations, including Na(+), K(+), and Ca(2+), with higher permeability for Ca(2+). Activated by multiple factors, such as temperature, voltage, pressure, and changes in osmolality. Activated by cool temperatures (&lt;23-28 degrees Celsius) and by chemical ligands evoking a sensation of coolness, such as menthol and icilin, therefore plays a central role in the detection of environmental cold temperatures. TRPM8 is a voltage-dependent channel; its activation by cold or chemical ligands shifts its voltage thresholds towards physiological membrane potentials, leading to the opening of the channel. In addition to its critical role in temperature sensing, regulates basal tear secretion by sensing evaporation-induced cooling and changes in osmolality. In Mus musculus (Mouse), this protein is Transient receptor potential cation channel subfamily M member 8 (Trpm8).